A 327-amino-acid chain; its full sequence is Biotin synthase (327 aa).

In terms of domain architecture, Radical SAM core spans F44–R273. 3 residues coordinate [4Fe-4S] cluster: C62, C66, and C69. [2Fe-2S] cluster contacts are provided by C138, C198, and R268.

Belongs to the radical SAM superfamily. Biotin synthase family. As to quaternary structure, homodimer. It depends on [4Fe-4S] cluster as a cofactor. Requires [2Fe-2S] cluster as cofactor.

It catalyses the reaction (4R,5S)-dethiobiotin + (sulfur carrier)-SH + 2 reduced [2Fe-2S]-[ferredoxin] + 2 S-adenosyl-L-methionine = (sulfur carrier)-H + biotin + 2 5'-deoxyadenosine + 2 L-methionine + 2 oxidized [2Fe-2S]-[ferredoxin]. The protein operates within cofactor biosynthesis; biotin biosynthesis; biotin from 7,8-diaminononanoate: step 2/2. Functionally, catalyzes the conversion of dethiobiotin (DTB) to biotin by the insertion of a sulfur atom into dethiobiotin via a radical-based mechanism. This is Biotin synthase from Parabacteroides distasonis (strain ATCC 8503 / DSM 20701 / CIP 104284 / JCM 5825 / NCTC 11152).